The primary structure comprises 341 residues: Paired box protein Pax-9 (341 aa).

Positions 4-130 (AFGEVNQLGG…SSISRILRNK (127 aa)) form a DNA-binding region, paired. Residues 7 to 63 (EVNQLGGVFVNGRPLPNAIRLRIVELAQLGIRPCDISRQLRVSHGCVSKILARYNET) form a PAI subdomain region. Residues 82 to 130 (TVVKHIRTYKQRDPGIFAWEIRDRLLADGVCDKYNVPSVSSISRILRNK) are RED subdomain. Positions 168–189 (AAAAKVPTPPGVPAIPGSVAMP) are interaction with KDM5B.

As to quaternary structure, interacts with KDM5B.

The protein localises to the nucleus. Functionally, transcription factor required for normal development of thymus, parathyroid glands, ultimobranchial bodies, teeth, skeletal elements of skull and larynx as well as distal limbs. The sequence is that of Paired box protein Pax-9 (PAX9) from Perodicticus potto edwarsi (Potto).